Consider the following 521-residue polypeptide: Caspase-10 (521 aa).

Residues 1-219 (MKSQGQHWYS…GEEELVSQTD (219 aa)) constitute a propeptide that is removed on maturation. DED domains are found at residues 19-97 (SFRE…HLNC) and 114-187 (LFRN…NIEK). Polar residues-rich tracts occupy residues 231-248 (SWQN…TNGA) and 259-268 (ASANTLNSET). A disordered region spans residues 231–269 (SWQNKHAGSNGNRATNGAPSLVSRGMQGASANTLNSETS). Active-site residues include His358 and Cys401.

This sequence belongs to the peptidase C14A family. In terms of assembly, heterotetramer that consists of two anti-parallel arranged heterodimers, each one formed by a 23/17 kDa (p23/17) (depending on the splicing events) and a 12 kDa (p12) subunit. Self-associates. Interacts with FADD and CASP8. Found in a Fas signaling complex consisting of FAS, FADD, CASP8 and CASP10. Interacts with RFFL and RNF34; negatively regulate CASP10 through proteasomal degradation. Interacts with RIOK3. Post-translationally, cleavage by granzyme B and autocatalytic activity generate the two active subunits. As to expression, detectable in most tissues. Lowest expression is seen in brain, kidney, prostate, testis and colon.

The enzyme catalyses Strict requirement for Asp at position P1 and has a preferred cleavage sequence of Leu-Gln-Thr-Asp-|-Gly.. Involved in the activation cascade of caspases responsible for apoptosis execution. Recruited to both Fas- and TNFR-1 receptors in a FADD dependent manner. May participate in the granzyme B apoptotic pathways. Cleaves and activates effector caspases CASP3, CASP4, CASP6, CASP7, CASP8 and CASP9. Hydrolyzes the small- molecule substrates, Tyr-Val-Ala-Asp-|-AMC and Asp-Glu-Val-Asp-|-AMC. Functionally, isoform 7 can enhance NF-kappaB activity but promotes only slight apoptosis. In terms of biological role, isoform C is proteolytically inactive. The polypeptide is Caspase-10 (CASP10) (Homo sapiens (Human)).